The chain runs to 201 residues: 3-isopropylmalate dehydratase small subunit (201 aa).

Belongs to the LeuD family. LeuD type 1 subfamily. Heterodimer of LeuC and LeuD.

It carries out the reaction (2R,3S)-3-isopropylmalate = (2S)-2-isopropylmalate. The protein operates within amino-acid biosynthesis; L-leucine biosynthesis; L-leucine from 3-methyl-2-oxobutanoate: step 2/4. Catalyzes the isomerization between 2-isopropylmalate and 3-isopropylmalate, via the formation of 2-isopropylmaleate. This Rhodopseudomonas palustris (strain BisB18) protein is 3-isopropylmalate dehydratase small subunit.